The chain runs to 100 residues: UPF0213 protein YhbQ (100 aa).

In terms of domain architecture, GIY-YIG spans 2–77 (TPWFLYLIRT…KQLTKRQKER (76 aa)).

The protein belongs to the UPF0213 family.

This chain is UPF0213 protein YhbQ, found in Escherichia coli O127:H6 (strain E2348/69 / EPEC).